The chain runs to 498 residues: Glycerol kinase (498 aa).

Threonine 12 provides a ligand contact to ADP. 3 residues coordinate ATP: threonine 12, threonine 13, and serine 14. Threonine 12 contributes to the sn-glycerol 3-phosphate binding site. Arginine 16 lines the ADP pocket. 4 residues coordinate sn-glycerol 3-phosphate: arginine 82, glutamate 83, tyrosine 134, and aspartate 243. Glycerol is bound by residues arginine 82, glutamate 83, tyrosine 134, aspartate 243, and glutamine 244. Threonine 265 and glycine 308 together coordinate ADP. ATP is bound by residues threonine 265, glycine 308, glutamine 312, and glycine 409. Residues glycine 409 and asparagine 413 each coordinate ADP.

This sequence belongs to the FGGY kinase family. Homotetramer and homodimer (in equilibrium).

It catalyses the reaction glycerol + ATP = sn-glycerol 3-phosphate + ADP + H(+). It functions in the pathway polyol metabolism; glycerol degradation via glycerol kinase pathway; sn-glycerol 3-phosphate from glycerol: step 1/1. Its activity is regulated as follows. Activated by phosphorylation and inhibited by fructose 1,6-bisphosphate (FBP). Functionally, key enzyme in the regulation of glycerol uptake and metabolism. Catalyzes the phosphorylation of glycerol to yield sn-glycerol 3-phosphate. The protein is Glycerol kinase of Clostridium botulinum (strain Loch Maree / Type A3).